A 414-amino-acid chain; its full sequence is Phthiocerol/phthiodiolone dimycocerosyl transferase (414 aa).

The Proton acceptor role is filled by histidine 118.

Belongs to the acyltransferase PapA5 family. In terms of assembly, monomer. Interacts directly with the acyl carrier protein (ACP) domain of the mycocerosic acid synthase (mas) protein.

The enzyme catalyses 2 a mycocerosyl-[mycocerosic acid synthase] + a phthiocerol = a dimycocerosyl phthiocerol + 2 holo-[mycocerosic acid synthase].. The catalysed reaction is 2 a mycocerosyl-[mycocerosic acid synthase] + a phthiodiolone = a dimycocerosyl phthiodiolone + 2 holo-[mycocerosic acid synthase].. It carries out the reaction 2 a mycocerosyl-[mycocerosic acid synthase] + a phenolphthiocerol = a dimycocerosyl phenolphthiocerol + 2 holo-[mycocerosic acid synthase].. Functionally, catalyzes diesterification of phthiocerol, phthiodiolone, and phenolphthiocerol with mycocerosic acids, the final step in the phthiocerol, phthiodiolone and phenolphthiocerol dimycocerosate esters (PDIM) synthesis. Can directly transfer the mycocerosate bound to the mycocerosic acid synthase (mas) onto the substrate alcohols. This chain is Phthiocerol/phthiodiolone dimycocerosyl transferase (papA5), found in Mycobacterium ulcerans (strain Agy99).